We begin with the raw amino-acid sequence, 154 residues long: Nuclear cap-binding protein subunit 2 (154 aa).

Residues Tyr10, Tyr33, Arg102 to Asp106, Arg113 to Arg117, and Gln123 to Val124 contribute to the mRNA site. One can recognise an RRM domain in the interval Cys30–Gly108.

It belongs to the RRM NCBP2 family. In terms of assembly, component of the nuclear cap-binding complex (CBC), a heterodimer composed of Cbp80 and Cbp20 that interacts with m7GpppG-capped RNA. Interacts with Ars2.

The protein localises to the nucleus. Functionally, component of the cap-binding complex (CBC), which binds co-transcriptionally to the 5' cap of pre-mRNAs and is involved in various processes such as pre-mRNA splicing and RNA-mediated gene silencing (RNAi). The CBC complex is involved in miRNA-mediated RNA interference via its interaction with Ars2 and is required for primary microRNAs (miRNAs) processing. Also involved in innate immunity via the short interfering RNAs (siRNAs) processing machinery by restricting the viral RNA production. In the CBC complex, Cbp20 recognizes and binds capped RNAs (m7GpppG-capped RNA) but requires Cbp80 to stabilize the movement of its N-terminal loop and lock the CBC into a high affinity cap-binding state with the cap structure. The polypeptide is Nuclear cap-binding protein subunit 2 (Cbp20) (Drosophila persimilis (Fruit fly)).